We begin with the raw amino-acid sequence, 93 residues long: Molybdopterin synthase sulfur carrier subunit (93 aa).

Glycine 93 is subject to 1-thioglycine; alternate. Glycyl adenylate; alternate is present on glycine 93.

The protein belongs to the MoaD family. MOCS2A subfamily. Heterotetramer; composed of 2 small (MOCS2A) and 2 large (MOCS2B) subunits. C-terminal thiocarboxylation occurs in 2 steps, it is first acyl-adenylated (-COAMP) via the hesA/moeB/thiF part of uba4, then thiocarboxylated (-COSH) via the rhodanese domain of uba4.

It is found in the cytoplasm. Its pathway is cofactor biosynthesis; molybdopterin biosynthesis. Functionally, acts as a sulfur carrier required for molybdopterin biosynthesis. Component of the molybdopterin synthase complex that catalyzes the conversion of precursor Z into molybdopterin by mediating the incorporation of 2 sulfur atoms into precursor Z to generate a dithiolene group. In the complex, serves as sulfur donor by being thiocarboxylated (-COSH) at its C-terminus by uba4. After interaction with MOCS2B, the sulfur is then transferred to precursor Z to form molybdopterin. This chain is Molybdopterin synthase sulfur carrier subunit, found in Pyrenophora tritici-repentis (strain Pt-1C-BFP) (Wheat tan spot fungus).